Reading from the N-terminus, the 181-residue chain is ATP-dependent protease subunit HslV (181 aa).

The active site involves Thr-9. Residues Gly-164, Cys-167, and Thr-170 each contribute to the Na(+) site.

It belongs to the peptidase T1B family. HslV subfamily. In terms of assembly, a double ring-shaped homohexamer of HslV is capped on each side by a ring-shaped HslU homohexamer. The assembly of the HslU/HslV complex is dependent on binding of ATP.

Its subcellular location is the cytoplasm. It carries out the reaction ATP-dependent cleavage of peptide bonds with broad specificity.. With respect to regulation, allosterically activated by HslU binding. Its function is as follows. Protease subunit of a proteasome-like degradation complex believed to be a general protein degrading machinery. This Gemmatimonas aurantiaca (strain DSM 14586 / JCM 11422 / NBRC 100505 / T-27) protein is ATP-dependent protease subunit HslV.